Reading from the N-terminus, the 875-residue chain is MTLARFVLALVLGALPEVVXFDSVLNDSLHHRPRHSPPTGPHYPYYLPTQQRPPRTRPPPPLPRFPRPPRALPAQRPHALQAGHTPRPHPWGCPAGEPWVSVTDFGAPCLRWAEVPPFLERSPPANWAQLRGQRHNFCRSPDGAGRPWCFYGDARGKVDWGYCDCRHGSIRLRGGKNEFEGTVEVYASGVWGTVCSSHWDDSDASVICHQLQLGGKGIAKQTPFSGLGLIPIYWSNVRCRGDEENILLCEKDIWQGGVCPQKMAAAVTCSFSHGPTFPIIRLVGGSSVHEGRVELYHAGQWGTVCDDQWDDADAEVICRQLGLSGIAKAWHQAYFGEGSGPVMLDEVRCTGNELSIEQCPKSSWGEHNCGHKEDAGVSCTPLTDGVIRLAGGKGSHEGRLEVYYRGQWGTVCDDGWTELNTYVVCRQLGFKYGKQASANHFEESTGPIWLDDVSCSGKETRFLQCSRRQWGRHDCSHREDVSIACYPGGEGHRLSLGFPVRLMDGENKKEGRVEVFINGQWGTICDDGWTDKDAAVICRQLGYKGPARARTMAYFGEGKGPIHVDNVKCTGNERSLADCIKQDIGRHNCRHSEDAGVICDYFGKKASGNSNKESLSSVCGLRLLHRRQKRIIGGKNSLRGGWPWQVSLRLKSSHGDGRLLCGATLLSSCWVLTAAHCFKRYGNSTRNYAVRVGDYHTLVPEEFEEEIGVQQIVIHREYRPDSSDYDIALVRLQGPEEQCARFSSHVLPACLPLWRERPQKTASNCYITGWGDTGRAYSRTLQQAAIPLLPKRFCEERYKGRFTGRMLCAGNLHEHKRVDSCQGDSGGPLMCERPGESWVVYGVTSWGHGCGVKDSPGVYTKVSAFVPWIKSVTKL.

A signal peptide spans 1-20 (MTLARFVLALVLGALPEVVX). N-linked (GlcNAc...) asparagine glycosylation occurs at Asn-26. The disordered stretch occupies residues 31-88 (HRPRHSPPTGPHYPYYLPTQQRPPRTRPPPPLPRFPRPPRALPAQRPHALQAGHTPRP). Residues 56–71 (TRPPPPLPRFPRPPRA) show a composition bias toward pro residues. Positions 93–165 (CPAGEPWVSV…GKVDWGYCDC (73 aa)) constitute a Kringle domain. 20 cysteine pairs are disulfide-bonded: Cys-93–Cys-165, Cys-109–Cys-149, Cys-138–Cys-163, Cys-195–Cys-259, Cys-208–Cys-269, Cys-239–Cys-249, Cys-305–Cys-369, Cys-318–Cys-379, Cys-349–Cys-359, Cys-412–Cys-475, Cys-425–Cys-485, Cys-455–Cys-465, Cys-525–Cys-589, Cys-538–Cys-599, Cys-569–Cys-579, Cys-619–Cys-750, Cys-661–Cys-677, Cys-765–Cys-831, Cys-794–Cys-808, and Cys-821–Cys-850. 4 SRCR domains span residues 170–271 (IRLR…TCSF), 280–381 (IRLV…SCTP), 387–487 (IRLA…ACYP), and 500–601 (VRLM…ICDY). The segment at 619–630 (CGLRLLHRRQKR) is zymogen activation region. The Peptidase S1 domain occupies 631–874 (IIGGKNSLRG…FVPWIKSVTK (244 aa)). Catalysis depends on His-676, which acts as the Charge relay system. A glycan (N-linked (GlcNAc...) asparagine) is linked at Asn-683. Catalysis depends on Asp-726, which acts as the Charge relay system. Catalysis depends on Ser-825, which acts as the Charge relay system.

This sequence belongs to the peptidase S1 family.

The protein resides in the secreted. In terms of biological role, plays a role in neuronal plasticity and the proteolytic action may subserve structural reorganizations associated with learning and memory operations. In Nomascus leucogenys (Northern white-cheeked gibbon), this protein is Neurotrypsin (PRSS12).